Reading from the N-terminus, the 235-residue chain is Dual specificity protein phosphatase 15 (235 aa).

G2 is lipidated: N-myristoyl glycine. One can recognise a Tyrosine-protein phosphatase domain in the interval 4–144 (GMTKVLPGLY…LEEFGWANSQ (141 aa)). The active-site Phosphocysteine intermediate is C88. Low complexity predominate over residues 183–193 (AASATTASSAA). Residues 183–212 (AASATTASSAAEGTLQRLVPRSPRDSHQPL) form a disordered region.

Belongs to the protein-tyrosine phosphatase family. Non-receptor class dual specificity subfamily. In terms of tissue distribution, isoform 1 is expressed in testis; predominantly in developing spermatocytes (at protein level). Isoform 2 is highly expressed in testis. Expressed in spinal cord and specifically in oligodendroglial cells. Expressed in embryonic brain cortex; down-regulated in mice with experimental autoimmune encephalomyelitis (EAE).

The protein resides in the cell membrane. The enzyme catalyses O-phospho-L-tyrosyl-[protein] + H2O = L-tyrosyl-[protein] + phosphate. The catalysed reaction is O-phospho-L-seryl-[protein] + H2O = L-seryl-[protein] + phosphate. It carries out the reaction O-phospho-L-threonyl-[protein] + H2O = L-threonyl-[protein] + phosphate. Functionally, may dephosphorylate MAPK13, ATF2, ERBB3, PDGFRB and SNX6. Its function is as follows. May play a role in the regulation of oligodendrocyte differentiation. May play a role in the regulation of myelin formation. Involved in the regulation of Erk1/2 phosphorylation in Schwann cells; the signaling may be linked to the regulation of myelination. The polypeptide is Dual specificity protein phosphatase 15 (Mus musculus (Mouse)).